The primary structure comprises 87 residues: Non-structural protein NS3 (87 aa).

It is found in the host nucleus. Functionally, plays a role in viral DNA replication. The protein is Non-structural protein NS3 of Mustela (ADV).